Consider the following 522-residue polypeptide: Sulfite reductase [NADPH] flavoprotein alpha-component (522 aa).

One can recognise a Flavodoxin-like domain in the interval 60–198 (ITILFGSQTG…DTERWSSDAL (139 aa)). The segment at 217–242 (TLRSHQDLRSHQEQSRNRARPYDKDN) is disordered. The span at 220 to 242 (SHQDLRSHQEQSRNRARPYDKDN) shows a compositional bias: basic and acidic residues. One can recognise an FAD-binding FR-type domain in the interval 241–399 (DNPYTATLLE…VAPYRAFLQQ (159 aa)).

In terms of assembly, alpha(8)-beta(8). The alpha component is a flavoprotein, the beta component is a hemoprotein. It depends on FAD as a cofactor. FMN serves as cofactor.

It carries out the reaction hydrogen sulfide + 3 NADP(+) + 3 H2O = sulfite + 3 NADPH + 4 H(+). In terms of biological role, catalyzes the 6-electron reduction of sulfite to sulfide. This is one of several activities required for the biosynthesis of L-cysteine from sulfate. The flavo-protein component catalyzes the electron flow from NADPH -&gt; FAD -&gt; FMN to the hemoprotein component. The chain is Sulfite reductase [NADPH] flavoprotein alpha-component (cysJ) from Thiocapsa roseopersicina.